Here is a 353-residue protein sequence, read N- to C-terminus: Mitogen-activated protein kinase FUS3 (353 aa).

The Protein kinase domain occupies 13–309 (FQLKSLLGEG…AKEALEHPYL (297 aa)). Residues 19–27 (LGEGAYGVV) and Lys-42 contribute to the ATP site. Catalysis depends on Asp-137, which acts as the Proton acceptor. Thr-180 is modified (phosphothreonine). A TXY motif is present at residues 180-182 (TEY). Tyr-182 carries the phosphotyrosine modification. Lys-345 participates in a covalent cross-link: Glycyl lysine isopeptide (Lys-Gly) (interchain with G-Cter in ubiquitin).

This sequence belongs to the protein kinase superfamily. CMGC Ser/Thr protein kinase family. MAP kinase subfamily. In the nucleus, FUS3 forms a complex with DIG1, DIG2 and STE12. The interaction of FUS3 with STE12 depends on the presence of both DIG1 and DIG2. STE12 is lost from FUS3/DIG1/DIG2 complex after pheromone treatment. During its activation and phosphorylation, FUS3 forms a membrane-associated complex with the scaffold protein STE5, the MAPKK STE7, the MAPKKK STE11, and the G-protein beta subunit GBB/STE4; interacting directly with STE7 and STE5. Mg(2+) serves as cofactor. In terms of processing, dually phosphorylated on Thr-180 and Tyr-182 by STE7 in response to pheromone induction, which activates the enzyme. Activated FUS3 initiates a feedback signal, down-regulating phosphorylation of both, FUS3 and KSS1.

The protein localises to the nucleus. It is found in the cytoplasm. Its subcellular location is the periplasm. It catalyses the reaction L-seryl-[protein] + ATP = O-phospho-L-seryl-[protein] + ADP + H(+). The enzyme catalyses L-threonyl-[protein] + ATP = O-phospho-L-threonyl-[protein] + ADP + H(+). Activated by tyrosine and threonine phosphorylation after pheromone treatment. In terms of biological role, together with closely related KSS1, FUS3 is the final kinase in the signal transduction cascade regulating activation/repression of the mating and filamentation pathways, induced by pheromone and nitrogen/carbon limitation, respectively. Phosphorylated FUS3 activates the mating but suppresses the filamentation pathway, whereas activated KSS1 activates both pathways. Pheromone-activated FUS3 functions by inhibiting the binding of the transcriptional activator STE12 to filamentation specific genes while inducing its binding to and activity at mating specific genes. Non-activated FUS3 has a repressive effect on STE12 transcriptional activity. KSS1 can partially compensate for the lack of FUS3 but mating efficiency is reduced and the filamentation program is partially activated upon pheromone signaling. FUS3 phosphorylates STE7, STE5, FAR1, DIG1, DIG2 and STE12. This chain is Mitogen-activated protein kinase FUS3 (FUS3), found in Saccharomyces cerevisiae (strain ATCC 204508 / S288c) (Baker's yeast).